Reading from the N-terminus, the 247-residue chain is Cell division protein ZapD (247 aa).

This sequence belongs to the ZapD family. Interacts with FtsZ.

It localises to the cytoplasm. Functionally, cell division factor that enhances FtsZ-ring assembly. Directly interacts with FtsZ and promotes bundling of FtsZ protofilaments, with a reduction in FtsZ GTPase activity. This is Cell division protein ZapD from Escherichia coli O157:H7.